Reading from the N-terminus, the 1010-residue chain is Trifunctional purine biosynthetic protein adenosine-3 (1010 aa).

Residue Ala2 is modified to N-acetylalanine. Ser10 is subject to Phosphoserine. Residues 111-318 (KEFMDRHGIP…LYEVIQSTLD (208 aa)) enclose the ATP-grasp domain. ATP contacts are provided by residues 190–193 (EELL), Glu197, Arg220, and Asn229. Positions 288 and 290 each coordinate Mg(2+). N6-acetyllysine is present on Lys350. The interval 434–809 (SLTYKESGVD…HFSFEKKKAR (376 aa)) is AIRS domain. Phosphoserine is present on Ser440. Thr682 is subject to Phosphothreonine. Phosphoserine occurs at positions 796 and 802. The GART domain stretch occupies residues 810–1010 (VAVLISGTGS…NGKICWVKEE (201 aa)). N(1)-(5-phospho-beta-D-ribosyl)glycinamide is bound at residue 818–820 (GSN). Residues Arg871, 896 to 899 (MRIL), and Asn913 each bind (6R)-10-formyltetrahydrofolate. His915 acts as the Proton donor in catalysis. A (6R)-10-formyltetrahydrofolate-binding site is contributed by 947–951 (AEDVD). N(1)-(5-phospho-beta-D-ribosyl)glycinamide is bound at residue 977-980 (KLAE).

It in the N-terminal section; belongs to the GARS family. In the central section; belongs to the AIR synthase family. The protein in the C-terminal section; belongs to the GART family. Homodimer. It depends on Mg(2+) as a cofactor. The cofactor is Mn(2+).

It catalyses the reaction 5-phospho-beta-D-ribosylamine + glycine + ATP = N(1)-(5-phospho-beta-D-ribosyl)glycinamide + ADP + phosphate + H(+). The catalysed reaction is N(1)-(5-phospho-beta-D-ribosyl)glycinamide + (6R)-10-formyltetrahydrofolate = N(2)-formyl-N(1)-(5-phospho-beta-D-ribosyl)glycinamide + (6S)-5,6,7,8-tetrahydrofolate + H(+). The enzyme catalyses 2-formamido-N(1)-(5-O-phospho-beta-D-ribosyl)acetamidine + ATP = 5-amino-1-(5-phospho-beta-D-ribosyl)imidazole + ADP + phosphate + H(+). It functions in the pathway purine metabolism; IMP biosynthesis via de novo pathway; 5-amino-1-(5-phospho-D-ribosyl)imidazole from N(2)-formyl-N(1)-(5-phospho-D-ribosyl)glycinamide: step 2/2. Its pathway is purine metabolism; IMP biosynthesis via de novo pathway; N(1)-(5-phospho-D-ribosyl)glycinamide from 5-phospho-alpha-D-ribose 1-diphosphate: step 2/2. It participates in purine metabolism; IMP biosynthesis via de novo pathway; N(2)-formyl-N(1)-(5-phospho-D-ribosyl)glycinamide from N(1)-(5-phospho-D-ribosyl)glycinamide (10-formyl THF route): step 1/1. Trifunctional enzyme that catalyzes three distinct reactions as part of the 'de novo' inosine monophosphate biosynthetic pathway. The protein is Trifunctional purine biosynthetic protein adenosine-3 (GART) of Homo sapiens (Human).